The primary structure comprises 587 residues: Transport inhibitor response 1-like protein Os05g0150500 (587 aa).

Positions 6–63 (SRAACAAAAPPWHSLPDEVWEHAFSFLPAAADRGAAAGACSSWLRAERRSRRRLAVAN) constitute an F-box domain. Position 85 (lysine 85) interacts with 1D-myo-inositol hexakisphosphate. Residues 92-93 (DF) are interaction with auxin-responsive proteins. 1D-myo-inositol hexakisphosphate is bound by residues 124-125 (KR) and arginine 355. The tract at residues 358–363 (PSDPFG) is interaction with auxin-responsive proteins. 409–411 (CFR) lines the 1D-myo-inositol hexakisphosphate pocket. The tract at residues 413 to 417 (CILEP) is interaction with auxin-responsive proteins. Residue arginine 444 coordinates 1D-myo-inositol hexakisphosphate. The tract at residues 472 to 473 (AF) is interaction with auxin-responsive proteins. Residues 492–493 (KK) and arginine 517 contribute to the 1D-myo-inositol hexakisphosphate site.

As to quaternary structure, part of a SCF (SKP1-cullin-F-box) protein ligase complex. May interact with auxin and auxin-responsive proteins.

The protein localises to the nucleus. The protein operates within protein modification; protein ubiquitination. The chain is Transport inhibitor response 1-like protein Os05g0150500 from Oryza sativa subsp. japonica (Rice).